The chain runs to 73 residues: MPKKEGVIEIEGTVVEALPNAMFRVELSNGHKVLAHISGKMRQHYIRILPEDRVVVELSPYDLTRGRIVYRYK.

Residues 1 to 73 form the S1-like domain; that stretch reads MPKKEGVIEI…TRGRIVYRYK (73 aa).

It belongs to the IF-1 family. In terms of assembly, component of the 30S ribosomal translation pre-initiation complex which assembles on the 30S ribosome in the order IF-2 and IF-3, IF-1 and N-formylmethionyl-tRNA(fMet); mRNA recruitment can occur at any time during PIC assembly.

It is found in the cytoplasm. One of the essential components for the initiation of protein synthesis. Stabilizes the binding of IF-2 and IF-3 on the 30S subunit to which N-formylmethionyl-tRNA(fMet) subsequently binds. Helps modulate mRNA selection, yielding the 30S pre-initiation complex (PIC). Upon addition of the 50S ribosomal subunit IF-1, IF-2 and IF-3 are released leaving the mature 70S translation initiation complex. In Nocardioides sp. (strain ATCC BAA-499 / JS614), this protein is Translation initiation factor IF-1.